Consider the following 515-residue polypeptide: Maturase K (515 aa).

The protein belongs to the intron maturase 2 family. MatK subfamily.

Its subcellular location is the plastid. It localises to the chloroplast. Functionally, usually encoded in the trnK tRNA gene intron. Probably assists in splicing its own and other chloroplast group II introns. This Pinus sibirica (Siberian pine) protein is Maturase K.